The chain runs to 364 residues: tRNA-specific 2-thiouridylase MnmA 2 (364 aa).

ATP contacts are provided by residues 10–17 and Met36; that span reads GMSGGVDS. Cys106 serves as the catalytic Nucleophile. Cysteines 106 and 204 form a disulfide. Gly130 is an ATP binding site. The interval 154 to 156 is interaction with tRNA; the sequence is KDQ. The active-site Cysteine persulfide intermediate is the Cys204. The segment at 310–311 is interaction with tRNA; that stretch reads RY.

This sequence belongs to the MnmA/TRMU family.

The protein resides in the cytoplasm. It carries out the reaction S-sulfanyl-L-cysteinyl-[protein] + uridine(34) in tRNA + AH2 + ATP = 2-thiouridine(34) in tRNA + L-cysteinyl-[protein] + A + AMP + diphosphate + H(+). Functionally, catalyzes the 2-thiolation of uridine at the wobble position (U34) of tRNA, leading to the formation of s(2)U34. This Thermoanaerobacter pseudethanolicus (strain ATCC 33223 / 39E) (Clostridium thermohydrosulfuricum) protein is tRNA-specific 2-thiouridylase MnmA 2.